The chain runs to 383 residues: Lipoyl synthase, mitochondrial (383 aa).

Over residues 25-34 (STPSLLQTLD) the composition is skewed to polar residues. Residues 25–44 (STPSLLQTLDPSVPSPPAAG) are disordered. Residues cysteine 110, cysteine 115, cysteine 121, cysteine 141, cysteine 145, cysteine 148, and serine 357 each contribute to the [4Fe-4S] cluster site. A Radical SAM core domain is found at 126 to 346 (ETGTATATIM…RALGVEMGFR (221 aa)).

This sequence belongs to the radical SAM superfamily. Lipoyl synthase family. It depends on [4Fe-4S] cluster as a cofactor.

Its subcellular location is the mitochondrion. It carries out the reaction [[Fe-S] cluster scaffold protein carrying a second [4Fe-4S](2+) cluster] + N(6)-octanoyl-L-lysyl-[protein] + 2 oxidized [2Fe-2S]-[ferredoxin] + 2 S-adenosyl-L-methionine + 4 H(+) = [[Fe-S] cluster scaffold protein] + N(6)-[(R)-dihydrolipoyl]-L-lysyl-[protein] + 4 Fe(3+) + 2 hydrogen sulfide + 2 5'-deoxyadenosine + 2 L-methionine + 2 reduced [2Fe-2S]-[ferredoxin]. It participates in protein modification; protein lipoylation via endogenous pathway; protein N(6)-(lipoyl)lysine from octanoyl-[acyl-carrier-protein]: step 2/2. In terms of biological role, catalyzes the radical-mediated insertion of two sulfur atoms into the C-6 and C-8 positions of the octanoyl moiety bound to the lipoyl domains of lipoate-dependent enzymes, thereby converting the octanoylated domains into lipoylated derivatives. The polypeptide is Lipoyl synthase, mitochondrial (Zea mays (Maize)).